Consider the following 167-residue polypeptide: ATP synthase subunit b (167 aa).

A helical membrane pass occupies residues 7–25 (SFWLTISFVIFVYLIYRPA).

It belongs to the ATPase B chain family. In terms of assembly, F-type ATPases have 2 components, F(1) - the catalytic core - and F(0) - the membrane proton channel. F(1) has five subunits: alpha(3), beta(3), gamma(1), delta(1), epsilon(1). F(0) has three main subunits: a(1), b(2) and c(10-14). The alpha and beta chains form an alternating ring which encloses part of the gamma chain. F(1) is attached to F(0) by a central stalk formed by the gamma and epsilon chains, while a peripheral stalk is formed by the delta and b chains.

The protein localises to the cell inner membrane. Functionally, f(1)F(0) ATP synthase produces ATP from ADP in the presence of a proton or sodium gradient. F-type ATPases consist of two structural domains, F(1) containing the extramembraneous catalytic core and F(0) containing the membrane proton channel, linked together by a central stalk and a peripheral stalk. During catalysis, ATP synthesis in the catalytic domain of F(1) is coupled via a rotary mechanism of the central stalk subunits to proton translocation. Component of the F(0) channel, it forms part of the peripheral stalk, linking F(1) to F(0). This Rickettsia prowazekii (strain Madrid E) protein is ATP synthase subunit b.